Consider the following 615-residue polypeptide: Dolichyl-diphosphooligosaccharide--protein glycosyltransferase subunit 1A (615 aa).

A signal peptide spans 1–28 (MATPPPLRRVAALLLLLVAAASTPTARA). At 29-437 (DLVVTRADRK…RFNNISLLRE (409 aa)) the chain is on the lumenal side. The residue at position 187 (Lys-187) is an N6-acetyllysine. Residues Asn-300, Asn-353, and Asn-431 are each glycosylated (N-linked (GlcNAc...) asparagine). Residues 438 to 455 (PMMLITGFFLLFMACIVY) traverse the membrane as a helical segment. The Cytoplasmic segment spans residues 456–615 (MRTDMSISKN…ESLLEYISEI (160 aa)).

This sequence belongs to the OST1 family. In terms of assembly, component of the oligosaccharyltransferase (OST) complex.

The protein localises to the endoplasmic reticulum membrane. Its pathway is protein modification; protein glycosylation. Its function is as follows. Subunit of the oligosaccharyl transferase (OST) complex that catalyzes the initial transfer of a defined glycan (Glc(3)Man(9)GlcNAc(2) in eukaryotes) from the lipid carrier dolichol-pyrophosphate to an asparagine residue within an Asn-X-Ser/Thr consensus motif in nascent polypeptide chains, the first step in protein N-glycosylation. N-glycosylation occurs cotranslationally and the complex associates with the Sec61 complex at the channel-forming translocon complex that mediates protein translocation across the endoplasmic reticulum (ER). All subunits are required for a maximal enzyme activity. This Oryza sativa subsp. japonica (Rice) protein is Dolichyl-diphosphooligosaccharide--protein glycosyltransferase subunit 1A (OST1A).